The following is a 524-amino-acid chain: Peptide chain release factor 3 (524 aa).

The region spanning 10-278 is the tr-type G domain; it reads DSRRTFAIIS…TFLQFAPAPH (269 aa). GTP contacts are provided by residues 19–26, 87–91, and 141–144; these read SHPDAGKT, DTPGH, and NKLD.

The protein belongs to the TRAFAC class translation factor GTPase superfamily. Classic translation factor GTPase family. PrfC subfamily.

Its subcellular location is the cytoplasm. Functionally, increases the formation of ribosomal termination complexes and stimulates activities of RF-1 and RF-2. It binds guanine nucleotides and has strong preference for UGA stop codons. It may interact directly with the ribosome. The stimulation of RF-1 and RF-2 is significantly reduced by GTP and GDP, but not by GMP. This Enterococcus faecalis (strain ATCC 700802 / V583) protein is Peptide chain release factor 3.